We begin with the raw amino-acid sequence, 336 residues long: Anthranilate phosphoribosyltransferase (336 aa).

Residues glycine 82, glycine 85–aspartate 86, threonine 90, asparagine 92–threonine 95, lysine 110–glycine 118, and serine 122 contribute to the 5-phospho-alpha-D-ribose 1-diphosphate site. Anthranilate is bound at residue glycine 82. Serine 94 contributes to the Mg(2+) binding site. Asparagine 113 is an anthranilate binding site. Arginine 168 serves as a coordination point for anthranilate. Mg(2+) is bound by residues aspartate 227 and glutamate 228.

This sequence belongs to the anthranilate phosphoribosyltransferase family. As to quaternary structure, homodimer. Mg(2+) is required as a cofactor.

It catalyses the reaction N-(5-phospho-beta-D-ribosyl)anthranilate + diphosphate = 5-phospho-alpha-D-ribose 1-diphosphate + anthranilate. Its pathway is amino-acid biosynthesis; L-tryptophan biosynthesis; L-tryptophan from chorismate: step 2/5. Its function is as follows. Catalyzes the transfer of the phosphoribosyl group of 5-phosphorylribose-1-pyrophosphate (PRPP) to anthranilate to yield N-(5'-phosphoribosyl)-anthranilate (PRA). In Desulfitobacterium hafniense (strain Y51), this protein is Anthranilate phosphoribosyltransferase.